The following is a 272-amino-acid chain: uncharacterized protein (272 aa).

This is an uncharacterized protein from Saccharomyces cerevisiae (strain ATCC 204508 / S288c) (Baker's yeast).